The following is a 166-amino-acid chain: Large ribosomal subunit protein uL10 (166 aa).

The protein belongs to the universal ribosomal protein uL10 family. As to quaternary structure, part of the ribosomal stalk of the 50S ribosomal subunit. The N-terminus interacts with L11 and the large rRNA to form the base of the stalk. The C-terminus forms an elongated spine to which L12 dimers bind in a sequential fashion forming a multimeric L10(L12)X complex.

Its function is as follows. Forms part of the ribosomal stalk, playing a central role in the interaction of the ribosome with GTP-bound translation factors. This Neisseria meningitidis serogroup A / serotype 4A (strain DSM 15465 / Z2491) protein is Large ribosomal subunit protein uL10 (rplJ).